Here is a 564-residue protein sequence, read N- to C-terminus: MFS-type efflux transporter ffsH (564 aa).

The segment covering 1-18 has biased composition (basic and acidic residues); that stretch reads MSEAEKKASQDAQHKEPM. The interval 1–37 is disordered; that stretch reads MSEAEKKASQDAQHKEPMADSETQLDSDSAPSSQAEK. Over residues 21–35 the composition is skewed to polar residues; it reads SETQLDSDSAPSSQA. 4 helical membrane passes run 43-63, 98-118, 131-151, and 157-177; these read YPLSFWLAFGALCLTGLISAM, YVMILATAIFLLGSGICGGAN, GIGAGGINMLVDLIICDLVPM, and FIGLLFLFVSIGTTSGPIIGG. N-linked (GlcNAc...) asparagine glycosylation occurs at Asn-182. 9 consecutive transmembrane segments (helical) span residues 187–207, 226–246, 254–274, 300–320, 334–354, 362–382, 389–409, 427–447, and 502–522; these read WVFYINLPMGGAALVLLVLFL, VVGNAILVGATFSILYALTYG, AANIVAPFVLGFVGLGIFIAW, FFISFMTMILAFWVVYFYPVY, VHLLPFEVSFPIFAAVGGGLV, PIHMVATSIVTIAIGASSVLT, AWAVLQIFIGMGLGSLISTTL, TWAYMRSLGTIWGVSVPAAIF, and VWLVSIAFGAVTVLSTLFEKE. The interval 540-564 is disordered; sequence GDAKGDVERGEGQNDSREGGQNENV. N-linked (GlcNAc...) asparagine glycosylation is present at Asn-553.

It belongs to the major facilitator superfamily.

The protein resides in the cell membrane. Functionally, MFS-type efflux transporter; part of the gene cluster that mediates the biosynthesis of the cytotoxic leucine-containing cytochalasans, including aspochalasin C, aspochalasin E, TMC-169, flavichalasine F, aspergillin PZ, aspochalasin M and flavichalasine G. FfsH might be involved in the excretion of cytochalasans. In Aspergillus flavipes, this protein is MFS-type efflux transporter ffsH.